Here is a 626-residue protein sequence, read N- to C-terminus: Lysine--tRNA ligase, cytoplasmic (626 aa).

N-acetylmethionine is present on M1. 2 stretches are compositionally biased toward polar residues: residues 1 to 11 (MEGAADQTTKA) and 18 to 27 (DSSTTLNAAE). The segment at 1–84 (MEGAADQTTK…QKAVAADDEE (84 aa)) is disordered. The stretch at 37-69 (RSKNALKKEQKMKQKEEEKRRKDEEKAEKAKQA) forms a coiled coil. Positions 42-67 (LKKEQKMKQKEEEKRRKDEEKAEKAK) are enriched in basic and acidic residues. The segment covering 69 to 78 (APKASSQKAV) has biased composition (low complexity). Positions 141 to 217 (SLAGRIMSKR…RGELSIFPRS (77 aa)) form a DNA-binding region, OB. The substrate site is built by G313 and E337. ATP is bound by residues 359–361 (RNE) and 367–368 (HN). Substrate contacts are provided by E375 and Y377. Ca(2+) contacts are provided by E521 and E528. 528–529 (EL) contributes to the ATP binding site. N531 and E535 together coordinate substrate. 584–587 (GIDR) contributes to the ATP binding site.

It belongs to the class-II aminoacyl-tRNA synthetase family. The cofactor is Ca(2+).

It is found in the cytoplasm. Its subcellular location is the cytosol. The enzyme catalyses tRNA(Lys) + L-lysine + ATP = L-lysyl-tRNA(Lys) + AMP + diphosphate. Its function is as follows. Catalyzes the specific attachment of an amino acid to its cognate tRNA in a 2 step reaction: the amino acid (AA) is first activated by ATP to form AA-AMP and then transferred to the acceptor end of the tRNA. Promotes aminoacylation of non-cognate tRNAs and translational recoding of lysine at nonsense codons. This chain is Lysine--tRNA ligase, cytoplasmic, found in Arabidopsis thaliana (Mouse-ear cress).